The primary structure comprises 202 residues: Holliday junction branch migration complex subunit RuvA (202 aa).

Positions 1-64 (MIGYLKGQIL…YDGTVLYGFL (64 aa)) are domain I. The interval 65 to 146 (TKEDKQLWAI…AVTIAGVPKI (82 aa)) is domain II. The segment at 147 to 155 (KIEGEAPFM) is flexible linker. The segment at 155 to 202 (MSEVMMALTALGYSPMEARKAIDQLYKTGLANDSVENIIRAALRILKK) is domain III.

It belongs to the RuvA family. Homotetramer. Forms an RuvA(8)-RuvB(12)-Holliday junction (HJ) complex. HJ DNA is sandwiched between 2 RuvA tetramers; dsDNA enters through RuvA and exits via RuvB. An RuvB hexamer assembles on each DNA strand where it exits the tetramer. Each RuvB hexamer is contacted by two RuvA subunits (via domain III) on 2 adjacent RuvB subunits; this complex drives branch migration. In the full resolvosome a probable DNA-RuvA(4)-RuvB(12)-RuvC(2) complex forms which resolves the HJ.

The protein localises to the cytoplasm. The RuvA-RuvB-RuvC complex processes Holliday junction (HJ) DNA during genetic recombination and DNA repair, while the RuvA-RuvB complex plays an important role in the rescue of blocked DNA replication forks via replication fork reversal (RFR). RuvA specifically binds to HJ cruciform DNA, conferring on it an open structure. The RuvB hexamer acts as an ATP-dependent pump, pulling dsDNA into and through the RuvAB complex. HJ branch migration allows RuvC to scan DNA until it finds its consensus sequence, where it cleaves and resolves the cruciform DNA. This chain is Holliday junction branch migration complex subunit RuvA, found in Elusimicrobium minutum (strain Pei191).